Consider the following 219-residue polypeptide: Urease accessory protein UreG (219 aa).

Positions 1 to 20 (MSALHSIPHRSKKLPPLRVG) are disordered. 23-30 (GPVGSGKT) lines the GTP pocket.

The protein belongs to the SIMIBI class G3E GTPase family. UreG subfamily. In terms of assembly, homodimer. UreD, UreF and UreG form a complex that acts as a GTP-hydrolysis-dependent molecular chaperone, activating the urease apoprotein by helping to assemble the nickel containing metallocenter of UreC. The UreE protein probably delivers the nickel.

The protein resides in the cytoplasm. Facilitates the functional incorporation of the urease nickel metallocenter. This process requires GTP hydrolysis, probably effectuated by UreG. In Methylibium petroleiphilum (strain ATCC BAA-1232 / LMG 22953 / PM1), this protein is Urease accessory protein UreG.